The chain runs to 134 residues: MSYTRTIHSSASILKMNSALQISCLLVVLGCLLGSGHCQSEAEFTAKSREIAQMFGNPSVDKYTKARNLPALLAFYEKYSSRLRLTPQERNSINNAIRQYKAQRNQQVDGVSAQGGWLFDIIKTAISIIVKAVE.

Positions 1–38 are cleaved as a signal peptide; it reads MSYTRTIHSSASILKMNSALQISCLLVVLGCLLGSGHC.

This sequence belongs to the Turandot family.

It localises to the secreted. In terms of biological role, a humoral factor that may play a role in stress tolerance. In Drosophila sechellia (Fruit fly), this protein is Protein Turandot E.